We begin with the raw amino-acid sequence, 934 residues long: Protein translocase subunit SecA (934 aa).

Residues Gln90, 108–112 (GEGKT), and Asp509 each bind ATP. The disordered stretch occupies residues 535–565 (PEEDHTPPVPLQRSAPGGFSDAAAPSLPRSG).

The protein belongs to the SecA family. As to quaternary structure, monomer and homodimer. Part of the essential Sec protein translocation apparatus which comprises SecA, SecYEG and auxiliary proteins SecDF. Other proteins may also be involved.

Its subcellular location is the cell inner membrane. The protein resides in the cellular thylakoid membrane. It localises to the cytoplasm. The enzyme catalyses ATP + H2O + cellular proteinSide 1 = ADP + phosphate + cellular proteinSide 2.. Functionally, part of the Sec protein translocase complex. Interacts with the SecYEG preprotein conducting channel. Has a central role in coupling the hydrolysis of ATP to the transfer of proteins into and across the cell membrane, serving as an ATP-driven molecular motor driving the stepwise translocation of polypeptide chains across the membrane. Its function is as follows. Probably participates in protein translocation into and across both the cytoplasmic and thylakoid membranes in cyanobacterial cells. This Synechococcus sp. (strain CC9605) protein is Protein translocase subunit SecA.